The chain runs to 419 residues: UDP-N-acetylglucosamine 1-carboxyvinyltransferase 2 (419 aa).

Lys-22–Asn-23 provides a ligand contact to phosphoenolpyruvate. Arg-92 provides a ligand contact to UDP-N-acetyl-alpha-D-glucosamine. Cys-116 (proton donor) is an active-site residue. The residue at position 116 (Cys-116) is a 2-(S-cysteinyl)pyruvic acid O-phosphothioketal. UDP-N-acetyl-alpha-D-glucosamine is bound by residues Arg-121–Leu-125, Asp-306, and Ile-328.

It belongs to the EPSP synthase family. MurA subfamily.

Its subcellular location is the cytoplasm. The enzyme catalyses phosphoenolpyruvate + UDP-N-acetyl-alpha-D-glucosamine = UDP-N-acetyl-3-O-(1-carboxyvinyl)-alpha-D-glucosamine + phosphate. Its pathway is cell wall biogenesis; peptidoglycan biosynthesis. Cell wall formation. Adds enolpyruvyl to UDP-N-acetylglucosamine. The protein is UDP-N-acetylglucosamine 1-carboxyvinyltransferase 2 of Streptococcus mutans serotype c (strain ATCC 700610 / UA159).